Reading from the N-terminus, the 359-residue chain is 4-galactosyl-N-acetylglucosaminide 3-alpha-L-fucosyltransferase FUT6 (359 aa).

The Cytoplasmic portion of the chain corresponds to 1–14 (MDPLGPAKPQWSWR). The chain crosses the membrane as a helical; Signal-anchor for type II membrane protein span at residues 15–34 (CCLTTLLFQLLVAVCFFSYL). The Lumenal portion of the chain corresponds to 35-359 (RVSRDDPTVY…QTRSIAAWFT (325 aa)). N-linked (GlcNAc...) asparagine glycosylation is found at N46, N91, N153, and N184. The tract at residues 73–112 (KPIALPRCSEMVPGTADCNITADRKVYPQADAVIVHHREV) is determines site-specific fucosylation.

Belongs to the glycosyltransferase 10 family. In terms of assembly, homodimer and monomer. Monomer (secreted form). N-glycosylated. Post-translationally, proteolytic cleavage releases a secreted glycoform of 43 kDa.

Its subcellular location is the golgi apparatus. The protein localises to the golgi stack membrane. It localises to the secreted. It catalyses the reaction a beta-D-galactosyl-(1-&gt;4)-N-acetyl-beta-D-glucosaminyl derivative + GDP-beta-L-fucose = a beta-D-galactosyl-(1-&gt;4)-[alpha-L-fucosyl-(1-&gt;3)]-N-acetyl-beta-D-glucosaminyl derivative + GDP + H(+). The enzyme catalyses an N-acetyl-alpha-neuraminyl-(2-&gt;3)-beta-D-galactosyl-(1-&gt;4)-N-acetyl-beta-D-glucosaminyl derivative + GDP-beta-L-fucose = an alpha-Neu5Ac-(2-&gt;3)-beta-D-Gal-(1-&gt;4)-[alpha-L-Fuc-(1-&gt;3)]-beta-D-GlcNAc derivative + GDP + H(+). The catalysed reaction is an alpha-Neu5Ac-(2-&gt;3)-beta-D-Gal-(1-&gt;4)-beta-D-GlcNAc-(1-&gt;3)-beta-D-Gal-(1-&gt;4)-[alpha-L-Fuc-(1-&gt;3)]-beta-D-GlcNAc derivative + GDP-beta-L-fucose = an alpha-Neu5Ac-(2-&gt;3)-beta-D-Gal-(1-&gt;4)-[alpha-L-Fuc-(1-&gt;3)]-beta-D-GlcNAc-(1-&gt;3)-beta-D-Gal-(1-&gt;4)-[alpha-L-Fuc-(1-&gt;3)]-beta-D-GlcNAc derivative + GDP + H(+). It carries out the reaction a neolactoside nLc6Cer + GDP-beta-L-fucose = beta-D-Gal-(1-&gt;4)-[alpha-L-Fuc-(1-&gt;3)]-beta-D-GlcNAc-(1-&gt;3)-beta-D-Gal-(1-&gt;4)-beta-D-GlcNAc-(1-&gt;3)-beta-D-Gal-(1-&gt;4)-beta-D-Glc-(1&lt;-&gt;1')-Cer + GDP + H(+). It catalyses the reaction a neolactoside nLc6Cer + GDP-beta-L-fucose = beta-D-galactosyl-(1-&gt;4)-N-acetyl-beta-D-glucosaminyl-(1-&gt;3)-beta-D-galactosyl-(1-&gt;4)-[alpha-L-fucosyl-(1-&gt;3)]-N-acetyl-beta-D-glucosaminyl-(1-&gt;3)-beta-D-galactosyl-(1-&gt;4)-beta-D-glucosyl-(1&lt;-&gt;1')-ceramide + GDP + H(+). The enzyme catalyses a neolactoside VI(3)-alpha-NeuNAc-nLc6Cer + GDP-beta-L-fucose = a neolactoside VI(3)-alpha-NeuAc,V(3)-alphaFuc-nLc6Cer + GDP + H(+). The catalysed reaction is beta-D-galactosyl-(1-&gt;4)-N-acetyl-D-glucosamine + GDP-beta-L-fucose = beta-D-galactosyl-(1-&gt;4)-[alpha-L-fucosyl-(1-&gt;3)]-N-acetyl-D-glucosamine + GDP + H(+). It carries out the reaction N-acetyl-alpha-neuraminosyl-(2-&gt;3)-beta-D-galactosyl-(1-&gt;4)-N-acetyl-beta-D-glucosamine + GDP-beta-L-fucose = N-acetyl-alpha-neuraminosyl-(2-&gt;3)-beta-D-galactosyl-(1-&gt;4)-[alpha-L-fucosyl-(1-&gt;3)]-N-acetyl-beta-D-glucosamine + GDP + H(+). It catalyses the reaction lactose + GDP-beta-L-fucose = beta-D-galactosyl-(1-&gt;4)-[alpha-L-fucosyl-(1-&gt;3)]-D-glucose + GDP + H(+). The enzyme catalyses alpha-L-Fuc-(1-&gt;2)-beta-D-Gal-(1-&gt;4)-D-Glc + GDP-beta-L-fucose = alpha-L-Fuc-(1-&gt;2)-beta-D-Gal-(1-&gt;4)-[alpha-L-Fuc-(1-&gt;3)]-D-Glc + GDP + H(+). The catalysed reaction is a beta-D-galactosyl-(1-&gt;4)-N-acetyl-beta-D-6-sulfooxy-glucosaminyl derivative + GDP-beta-L-fucose = a beta-D-galactosyl-(1-&gt;4)-[alpha-L-fucosyl-(1-&gt;3)]-N-acetyl-beta-D-6-sulfooxy-glucosaminyl derivative + GDP + H(+). It functions in the pathway protein modification; protein glycosylation. Functionally, catalyzes the transfer of L-fucose, from a guanosine diphosphate-beta-L-fucose, to the N-acetyl glucosamine (GlcNAc) of a distal alpha2,3 sialylated lactosamine unit of a glycoprotein- or glycolipid-linked sialopolylactosamines chain or of a distal or internal lactosamine unit of a neutral glycoprotein- or glycolipid-linked polylactosamines chain through an alpha-1,3 glycosidic linkage and participates in surface expression of the sialyl Lewis X (sLe(x)), Lewis X (Le(x)) and non sialylated VIM2 determinants. Moreover transfers fucose to H-type 2 (Fucalpha1-2Galbeta1-4GlcNAc) chain acceptor substrates and participates in difucosylated sialyl Lewis x determinants. Also fucosylates a polylactosamine substrate having a 6 sulfate modification at the GlcNAc moiety and gives rise to sialyl and non-sialyl 6-sulfo lewis X. Does not have activity towards type 1 ((Galbeta1-3GlcNAc)) and H-type 1 chain (Fucalpha1-2Galbeta1-3GlcNAc) acceptors substrates. The chain is 4-galactosyl-N-acetylglucosaminide 3-alpha-L-fucosyltransferase FUT6 from Pan troglodytes (Chimpanzee).